Consider the following 341-residue polypeptide: N-acetyl-gamma-glutamyl-phosphate reductase (341 aa).

The active site involves Cys-147.

It belongs to the NAGSA dehydrogenase family. Type 1 subfamily.

The protein localises to the cytoplasm. It carries out the reaction N-acetyl-L-glutamate 5-semialdehyde + phosphate + NADP(+) = N-acetyl-L-glutamyl 5-phosphate + NADPH + H(+). It functions in the pathway amino-acid biosynthesis; L-arginine biosynthesis; N(2)-acetyl-L-ornithine from L-glutamate: step 3/4. In terms of biological role, catalyzes the NADPH-dependent reduction of N-acetyl-5-glutamyl phosphate to yield N-acetyl-L-glutamate 5-semialdehyde. In Dehalococcoides mccartyi (strain CBDB1), this protein is N-acetyl-gamma-glutamyl-phosphate reductase.